A 316-amino-acid polypeptide reads, in one-letter code: PAK4-inhibitor inka1 (316 aa).

The interval 108–130 (YSEVSGSSLRGEEDDIVEEESET) is disordered. Acidic residues predominate over residues 119–128 (EEDDIVEEES). Inka box stretches follow at residues 182 to 219 (DSQDWTGCLLSQSRSRQPLILGDNSFADLVKQWMDLPE) and 289 to 316 (SDIAEASTNLLNCRSRRPIICNEGAGFL).

It belongs to the INKA family. As to quaternary structure, interacts with pak4/pak5.

The protein localises to the nucleus. The protein resides in the cytoplasm. Functionally, inhibitor of the serine/threonine-protein kinase pak4/pak5. Acts by binding pak4/pak5 in a substrate-like manner, inhibiting the protein kinase activity. Required for the proper migration of neural crest cells during embryonic development, probably by inhibiting pak4/pak5. The chain is PAK4-inhibitor inka1 from Xenopus laevis (African clawed frog).